The primary structure comprises 125 residues: 13 kDa ribonucleoprotein-associated protein (125 aa).

The protein belongs to the eukaryotic ribosomal protein eL8 family. Component of the U3 snoRNP particle. Binds to the C'/D and B/C motifs in U3 snoRNA. Component of the 25S U4/U6.U5 tri-snRNP particle, a subcomplex of the spliceosome. Binds to the 5' stem-loop of U4 snRNA.

It is found in the nucleus. Its subcellular location is the nucleolus. In terms of biological role, common component of the spliceosome and rRNA processing machinery. In association with the spliceosomal U4/U6.U5 tri-snRNP particle, required for splicing of pre-mRNA. In association with box C/D snoRNPs, required for processing of pre-ribosomal RNA (rRNA) and site-specific 2'-O-methylation of substrate RNAs. Essential for the accumulation and stability of U4 snRNA, U6 snRNA, and box C/D snoRNAs. In Schizosaccharomyces pombe (strain 972 / ATCC 24843) (Fission yeast), this protein is 13 kDa ribonucleoprotein-associated protein (snu13).